The following is a 656-amino-acid chain: PAN2-PAN3 deadenylation complex subunit pan3 (656 aa).

Disordered stretches follow at residues 1–24 (MAAT…KNRD) and 75–117 (SFTP…QQAN). The segment at 24 to 53 (DTKETLCRNVVIYGHCRWEDSGCTFNHDQN) adopts a C3H1-type zinc-finger fold. The PABPC-interacting motif-2 (PAM-2) motif lies at 63-83 (NSNRRVFNVESPSFTPANQQQ). Composition is skewed to polar residues over residues 75–96 (SFTP…SQAA) and 107–117 (GTSTPTLQQAN). The tract at residues 251–514 (QLLPNSGLPN…TVETLLGGIT (264 aa)) is pseudokinase domain. ATP contacts are provided by residues 275–280 (TRNSTC), Arg-302, 352–359 (DFHPLSET), and 412–413 (SK). Residues 515 to 553 (THLANFANFVMQESDEKEFHLMRELENGRIARLMFKLSV) are a coiled coil. A knob domain region spans residues 554-656 (VNERGDSCGV…SKPSATGATI (103 aa)).

This sequence belongs to the protein kinase superfamily. PAN3 family. As to quaternary structure, homodimer. Forms a heterotrimer with a catalytic subunit par-1/pan2 to form the poly(A)-nuclease (PAN) deadenylation complex. Interacts (via PAM-2 motif) with poly(A)-binding protein pabp-1 (via PABC domain), conferring substrate specificity of the enzyme complex.

The protein localises to the cytoplasm. In terms of biological role, regulatory subunit of the poly(A)-nuclease (PAN) deadenylation complex, one of two cytoplasmic mRNA deadenylases involved in mRNA turnover. PAN specifically shortens poly(A) tails of RNA and the activity is stimulated by poly(A)-binding protein pabp-1. PAN deadenylation is followed by rapid degradation of the shortened mRNA tails by the CCR4-NOT complex. Deadenylated mRNAs are then degraded by two alternative mechanisms, namely exosome-mediated 3'-5' exonucleolytic degradation, or deadenylation-dependent mRNA decaping and subsequent 5'-3' exonucleolytic degradation by rgb-30/xrn1. May also be involved in post-transcriptional maturation of mRNA poly(A) tails. par-2/pan3 acts as a positive regulator for PAN activity, recruiting the catalytic subunit par-1/pan2 to mRNA via its interaction with RNA and with pabp-1. This is PAN2-PAN3 deadenylation complex subunit pan3 (par-2) from Neurospora crassa (strain ATCC 24698 / 74-OR23-1A / CBS 708.71 / DSM 1257 / FGSC 987).